Here is a 645-residue protein sequence, read N- to C-terminus: Cysteine-rich receptor-like protein kinase 19 (645 aa).

A signal peptide spans 1 to 20 (MSSLISFIFLFLFSSITASA). Over 21–262 (QNTFYLYHNC…PRPGKGGNSS (242 aa)) the chain is Extracellular. Gnk2-homologous domains lie at 24–129 (FYLY…NRNI) and 135–239 (TDGG…NYAF). Residues Asn-29, Asn-39, Asn-57, Asn-101, Asn-185, Asn-241, and Asn-260 are each glycosylated (N-linked (GlcNAc...) asparagine). Residues 263-283 (VIIIAVVVPITVLFLLLVAVF) traverse the membrane as a helical segment. Topologically, residues 284-645 (SVRAKNKRTL…EASITRVTPR (362 aa)) are cytoplasmic. The Protein kinase domain occupies 326 to 603 (FLPINKLGQG…IVQMLTTSLI (278 aa)). ATP is bound by residues 332–340 (LGQGGFGEV) and Lys-354. Tyr-399 is subject to Phosphotyrosine. The Proton acceptor role is filled by Asp-451. At Thr-491 the chain carries Phosphothreonine. Position 499 is a phosphotyrosine (Tyr-499). Positions 616 to 645 (RSKQEQAGPSIDSSTHCSVDEASITRVTPR) are disordered. The segment covering 620 to 632 (EQAGPSIDSSTHC) has biased composition (polar residues).

This sequence belongs to the protein kinase superfamily. Ser/Thr protein kinase family. CRK subfamily. As to quaternary structure, interacts with MWL1.

Its subcellular location is the membrane. The catalysed reaction is L-seryl-[protein] + ATP = O-phospho-L-seryl-[protein] + ADP + H(+). It carries out the reaction L-threonyl-[protein] + ATP = O-phospho-L-threonyl-[protein] + ADP + H(+). The polypeptide is Cysteine-rich receptor-like protein kinase 19 (CRK19) (Arabidopsis thaliana (Mouse-ear cress)).